We begin with the raw amino-acid sequence, 260 residues long: Chloride intracellular channel Clic (260 aa).

Residues Phe42–Val66 form a helical membrane-spanning segment.

Belongs to the chloride channel CLIC family. As to expression, expressed in cardiac tubes.

It is found in the mitochondrion. The protein localises to the membrane. Functionally, might insert into membranes and form chloride ion channels. Channel activity depends on the pH. May play a role in ethanol sensitivity. The polypeptide is Chloride intracellular channel Clic (Drosophila melanogaster (Fruit fly)).